Here is a 595-residue protein sequence, read N- to C-terminus: Isoprene synthase, chloroplastic (595 aa).

Residues 1-37 constitute a chloroplast transit peptide; sequence MATELLCLHRPISLTHKLFRNPLPKVIQATPLTLKLR. Aspartate 345 serves as a coordination point for dimethylallyl diphosphate. The Mg(2+) site is built by aspartate 345 and aspartate 349. The short motif at 345-349 is the DDXXD motif element; it reads DDIYD. Residues glutamate 423, arginine 486, and asparagine 489 each coordinate dimethylallyl diphosphate. Mg(2+)-binding residues include asparagine 489, serine 493, and glutamate 497.

It belongs to the terpene synthase family. Tpsb subfamily. Mg(2+) serves as cofactor. It depends on Mn(2+) as a cofactor.

It is found in the plastid. The protein resides in the chloroplast. It catalyses the reaction dimethylallyl diphosphate = isoprene + diphosphate. In terms of biological role, lyase that catalyzes the formation of isoprene from dimethylallyl diphosphate. This Populus tremuloides (Quaking aspen) protein is Isoprene synthase, chloroplastic (ISPS).